We begin with the raw amino-acid sequence, 104 residues long: Gastrin (104 aa).

Residues methionine 1–alanine 21 form the signal peptide. A propeptide spanning residues serine 22–arginine 58 is cleaved from the precursor. Residues serine 22–alanine 70 form a disordered region. A pyrrolidone carboxylic acid mark is found at glutamine 59 and glutamine 76. At tyrosine 87 the chain carries Sulfotyrosine. A Phenylalanine amide modification is found at phenylalanine 92. Serine 96 is subject to Phosphoserine. A propeptide spanning residues serine 96–proline 104 is cleaved from the precursor.

Belongs to the gastrin/cholecystokinin family.

The protein localises to the secreted. Functionally, gastrin stimulates the stomach mucosa to produce and secrete hydrochloric acid and the pancreas to secrete its digestive enzymes. It also stimulates smooth muscle contraction and increases blood circulation and water secretion in the stomach and intestine. This chain is Gastrin (GAST), found in Canis lupus familiaris (Dog).